The primary structure comprises 91 residues: Small integral membrane protein 12-B (91 aa).

Residues 12 to 34 traverse the membrane as a helical segment; sequence YAPYITFPVAFVVGAVGYQLEWF.

Belongs to the SMIM12 family.

It is found in the membrane. This is Small integral membrane protein 12-B (smim12-b) from Xenopus laevis (African clawed frog).